Consider the following 100-residue polypeptide: NADH-quinone oxidoreductase subunit K (100 aa).

The next 3 helical transmembrane spans lie at 4–24 (LSHG…SLVM), 28–48 (ILFM…ALVV), and 60–80 (IMYI…LALL).

The protein belongs to the complex I subunit 4L family. In terms of assembly, NDH-1 is composed of 13 different subunits. Subunits NuoA, H, J, K, L, M, N constitute the membrane sector of the complex.

It localises to the cell membrane. It catalyses the reaction a quinone + NADH + 5 H(+)(in) = a quinol + NAD(+) + 4 H(+)(out). Its function is as follows. NDH-1 shuttles electrons from NADH, via FMN and iron-sulfur (Fe-S) centers, to quinones in the respiratory chain. The immediate electron acceptor for the enzyme in this species is believed to be ubiquinone. Couples the redox reaction to proton translocation (for every two electrons transferred, four hydrogen ions are translocated across the cytoplasmic membrane), and thus conserves the redox energy in a proton gradient. The sequence is that of NADH-quinone oxidoreductase subunit K from Buchnera aphidicola subsp. Baizongia pistaciae (strain Bp).